Here is a 289-residue protein sequence, read N- to C-terminus: Ribosomal RNA small subunit methyltransferase A (289 aa).

Residues Asn28, Leu30, Gly55, Glu76, Asp101, and Asn125 each coordinate S-adenosyl-L-methionine.

Belongs to the class I-like SAM-binding methyltransferase superfamily. rRNA adenine N(6)-methyltransferase family. RsmA subfamily.

It is found in the cytoplasm. It catalyses the reaction adenosine(1518)/adenosine(1519) in 16S rRNA + 4 S-adenosyl-L-methionine = N(6)-dimethyladenosine(1518)/N(6)-dimethyladenosine(1519) in 16S rRNA + 4 S-adenosyl-L-homocysteine + 4 H(+). Specifically dimethylates two adjacent adenosines (A1518 and A1519) in the loop of a conserved hairpin near the 3'-end of 16S rRNA in the 30S particle. May play a critical role in biogenesis of 30S subunits. The sequence is that of Ribosomal RNA small subunit methyltransferase A from Clostridioides difficile (strain 630) (Peptoclostridium difficile).